A 125-amino-acid chain; its full sequence is MARISGVDIPDNKRGEVSLTYIYGIGRNSAQSILTKAGVNWDKKVSEWNDDEANAVRAIIASEHKTEGALKSEVQLSIKRLMDIGCYRGLRHRKGLPVRGQRTKNNCRTRKGKRKTVANKKKATK.

The segment at 95–125 is disordered; the sequence is GLPVRGQRTKNNCRTRKGKRKTVANKKKATK.

The protein belongs to the universal ribosomal protein uS13 family. In terms of assembly, part of the 30S ribosomal subunit. Forms a loose heterodimer with protein S19. Forms two bridges to the 50S subunit in the 70S ribosome.

Functionally, located at the top of the head of the 30S subunit, it contacts several helices of the 16S rRNA. In the 70S ribosome it contacts the 23S rRNA (bridge B1a) and protein L5 of the 50S subunit (bridge B1b), connecting the 2 subunits; these bridges are implicated in subunit movement. Contacts the tRNAs in the A and P-sites. The sequence is that of Small ribosomal subunit protein uS13 from Cytophaga hutchinsonii (strain ATCC 33406 / DSM 1761 / CIP 103989 / NBRC 15051 / NCIMB 9469 / D465).